We begin with the raw amino-acid sequence, 555 residues long: Glutamine--tRNA ligase (555 aa).

The short motif at 34–44 (PEPNGYLHIGH) is the 'HIGH' region element. ATP contacts are provided by residues 35-37 (EPN) and 41-47 (HIGHAKS). Asp-67 and Tyr-212 together coordinate L-glutamine. Residues Thr-231, 261–262 (RL), and 269–271 (MSK) each bind ATP. A 'KMSKS' region motif is present at residues 268-272 (IMSKR).

Belongs to the class-I aminoacyl-tRNA synthetase family. As to quaternary structure, monomer.

Its subcellular location is the cytoplasm. It catalyses the reaction tRNA(Gln) + L-glutamine + ATP = L-glutaminyl-tRNA(Gln) + AMP + diphosphate. The chain is Glutamine--tRNA ligase from Yersinia enterocolitica serotype O:8 / biotype 1B (strain NCTC 13174 / 8081).